We begin with the raw amino-acid sequence, 110 residues long: PCNA-associated factor (110 aa).

A Glycyl lysine isopeptide (Lys-Gly) (interchain with G-Cter in ubiquitin) cross-link involves residue K15. The D-box signature appears at 23–34 (RKVLGSSTFVTN). Position 24 is an N6-acetyllysine; alternate (K24). K24 is covalently cross-linked (Glycyl lysine isopeptide (Lys-Gly) (interchain with G-Cter in ubiquitin); alternate). Position 28 is a phosphoserine (S28). Residues 29 to 39 (STFVTNSSGSS) are compositionally biased toward low complexity. The tract at residues 29–110 (STFVTNSSGS…QPDHRDDENE (82 aa)) is disordered. A PIP-box motif is present at residues 61–71 (QKGIGEFFRLS). A Phosphoserine modification is found at S71. Residues 71–80 (SPKDSKKENQ) are compositionally biased toward basic and acidic residues. Residues 77–79 (KEN) carry the KEN box motif. The Initiation motif motif lies at 84–96 (EAGSSGLGKAKRK).

As to quaternary structure, interacts (when monoubiquitinated at Lys-15 and Lys-24) with PCNA. Interacts with isoform 2/p33ING1b of ING1. Interacts with BRCA1. In terms of processing, monoubiquitinated at Lys-15 and Lys-24 during normal S phase, promoting its association with PCNA. Also diubiquitinated at these 2 sites. Following DNA damage, monoubiquitin chains at Lys-15 and Lys-24 are probably extended, leading to disrupt the interaction with PCNA. Polyubiquitinated by the APC/C complex at the mitotic exit, leading to its degradation by the proteasome.

The protein localises to the nucleus. The protein resides in the cytoplasm. It localises to the perinuclear region. PCNA-binding protein that acts as a regulator of DNA repair during DNA replication. Following DNA damage, the interaction with PCNA is disrupted, facilitating the interaction between monoubiquitinated PCNA and the translesion DNA synthesis DNA polymerase eta (POLH) at stalled replisomes, facilitating the bypass of replication-fork-blocking lesions. Also acts as a regulator of centrosome number. The protein is PCNA-associated factor of Rattus norvegicus (Rat).